The chain runs to 455 residues: Bifunctional protein GlmU (455 aa).

The interval 1–228 (MTQPLHVIIL…AQEAEGANDP (228 aa)) is pyrophosphorylase. UDP-N-acetyl-alpha-D-glucosamine-binding positions include 10 to 13 (LAAG), K24, Q76, 81 to 82 (GT), 103 to 105 (YGD), G138, E153, N168, and N226. D105 serves as a coordination point for Mg(2+). N226 is a binding site for Mg(2+). Residues 229–249 (WQLSQLERAWQRRAVRALCAQ) form a linker region. Residues 250-455 (GARVRDPARL…DGWKRPLKKS (206 aa)) form an N-acetyltransferase region. The UDP-N-acetyl-alpha-D-glucosamine site is built by R332 and K350. H362 serves as the catalytic Proton acceptor. The UDP-N-acetyl-alpha-D-glucosamine site is built by Y365 and N376. Acetyl-CoA contacts are provided by residues A379, 385–386 (NY), S404, A422, and R439.

In the N-terminal section; belongs to the N-acetylglucosamine-1-phosphate uridyltransferase family. It in the C-terminal section; belongs to the transferase hexapeptide repeat family. In terms of assembly, homotrimer. Mg(2+) is required as a cofactor.

It localises to the cytoplasm. The enzyme catalyses alpha-D-glucosamine 1-phosphate + acetyl-CoA = N-acetyl-alpha-D-glucosamine 1-phosphate + CoA + H(+). The catalysed reaction is N-acetyl-alpha-D-glucosamine 1-phosphate + UTP + H(+) = UDP-N-acetyl-alpha-D-glucosamine + diphosphate. It functions in the pathway nucleotide-sugar biosynthesis; UDP-N-acetyl-alpha-D-glucosamine biosynthesis; N-acetyl-alpha-D-glucosamine 1-phosphate from alpha-D-glucosamine 6-phosphate (route II): step 2/2. The protein operates within nucleotide-sugar biosynthesis; UDP-N-acetyl-alpha-D-glucosamine biosynthesis; UDP-N-acetyl-alpha-D-glucosamine from N-acetyl-alpha-D-glucosamine 1-phosphate: step 1/1. Its pathway is bacterial outer membrane biogenesis; LPS lipid A biosynthesis. In terms of biological role, catalyzes the last two sequential reactions in the de novo biosynthetic pathway for UDP-N-acetylglucosamine (UDP-GlcNAc). The C-terminal domain catalyzes the transfer of acetyl group from acetyl coenzyme A to glucosamine-1-phosphate (GlcN-1-P) to produce N-acetylglucosamine-1-phosphate (GlcNAc-1-P), which is converted into UDP-GlcNAc by the transfer of uridine 5-monophosphate (from uridine 5-triphosphate), a reaction catalyzed by the N-terminal domain. The protein is Bifunctional protein GlmU of Stenotrophomonas maltophilia (strain R551-3).